The chain runs to 448 residues: Glucose-6-phosphate isomerase (448 aa).

E290 functions as the Proton donor in the catalytic mechanism. Residues H311 and K425 contribute to the active site.

The protein belongs to the GPI family.

The protein resides in the cytoplasm. The catalysed reaction is alpha-D-glucose 6-phosphate = beta-D-fructose 6-phosphate. It participates in carbohydrate biosynthesis; gluconeogenesis. The protein operates within carbohydrate degradation; glycolysis; D-glyceraldehyde 3-phosphate and glycerone phosphate from D-glucose: step 2/4. In terms of biological role, catalyzes the reversible isomerization of glucose-6-phosphate to fructose-6-phosphate. This Acetivibrio thermocellus (strain ATCC 27405 / DSM 1237 / JCM 9322 / NBRC 103400 / NCIMB 10682 / NRRL B-4536 / VPI 7372) (Clostridium thermocellum) protein is Glucose-6-phosphate isomerase.